The following is a 365-amino-acid chain: Protein Tob1 (365 aa).

The Bipartite nuclear localization signal signature appears at 22 to 39 (RRRVNIFGEELERLLKQK). The tract at residues 82-92 (VRGNLPQDLSV) is important for nuclear localization. Over residues 144-160 (DPASSVSSSPSPPFGHS) the composition is skewed to low complexity. The segment at 144 to 171 (DPASSVSSSPSPPFGHSAAVSPTFMPRS) is disordered. The required for interaction with CPEB3 stretch occupies residues 161–220 (AAVSPTFMPRSTQPLTFTTATFAATKFGSTKMKNSGRSSKVARTSPISLGLNVNVNDLLK). Thr-204 is subject to Phosphothreonine. The Nuclear export signal motif lies at 228-236 (MHSLYGLGL). The segment at 233–287 (GLGLGSQQQPQPQPQQPPSQPPPPPPPPQQQQQHQQQQQQQQQQQQQPQQQTSAL) is disordered. The span at 243 to 261 (QPQPQQPPSQPPPPPPPPQ) shows a compositional bias: pro residues. The segment covering 262-283 (QQQQHQQQQQQQQQQQQQPQQQ) has biased composition (low complexity).

The protein belongs to the BTG family. Interacts with ERBB2. Interacts with CNOT7. Interacts with CPEB3 (via C-terminal RNA-binding region); recruits CNOT7 to CPEB3 to form a ternary complex required for mRNA deadenylation and decay. Interacts with CNOT8. Interacts with CPEB4. Phosphorylated on Ser and Thr residues.

It localises to the cytoplasm. The protein localises to the nucleus. Its function is as follows. Anti-proliferative protein; the function is mediated by association with deadenylase subunits of the CCR4-NOT complex. Mediates CPEB3-accelerated mRNA deadenylation by binding to CPEB3 and recruiting CNOT7 which leads to target mRNA deadenylation and decay. The protein is Protein Tob1 (Tob1) of Rattus norvegicus (Rat).